A 181-amino-acid polypeptide reads, in one-letter code: Calmodulin-like protein 6 (181 aa).

4 consecutive EF-hand domains span residues 33–68 (EQIKEYKGVFEMFDEEGNGEVKTGELEWLMSLLGIN), 69–104 (PTKSELASMAKDVDRDNKGFFNCDGFLALMGVYHEK), 107–142 (NQESELRAAFRVFDKEGKGYIDWNTLKYVLMNAGEP), and 143–178 (LNEVEAEQMMKEADKDGDRTIDYEEFVAMMTGESFK). Residues Asp156, Asp158, Asp160, Thr162, and Glu167 each contribute to the Ca(2+) site.

This sequence belongs to the calmodulin family. Calglandulin subfamily. Expressed in prostate, thymus, heart, skeleton muscle, bone marrow and ovary.

The protein resides in the cytoplasm. It localises to the nucleus. The sequence is that of Calmodulin-like protein 6 (CALML6) from Homo sapiens (Human).